Here is a 60-residue protein sequence, read N- to C-terminus: Large ribosomal subunit protein bL33 (60 aa).

The protein belongs to the bacterial ribosomal protein bL33 family.

This is Large ribosomal subunit protein bL33 from Chlorobium phaeobacteroides (strain DSM 266 / SMG 266 / 2430).